Reading from the N-terminus, the 250-residue chain is 3-deoxy-manno-octulosonate cytidylyltransferase (250 aa).

Belongs to the KdsB family.

The protein resides in the cytoplasm. The enzyme catalyses 3-deoxy-alpha-D-manno-oct-2-ulosonate + CTP = CMP-3-deoxy-beta-D-manno-octulosonate + diphosphate. It participates in nucleotide-sugar biosynthesis; CMP-3-deoxy-D-manno-octulosonate biosynthesis; CMP-3-deoxy-D-manno-octulosonate from 3-deoxy-D-manno-octulosonate and CTP: step 1/1. The protein operates within bacterial outer membrane biogenesis; lipopolysaccharide biosynthesis. Functionally, activates KDO (a required 8-carbon sugar) for incorporation into bacterial lipopolysaccharide in Gram-negative bacteria. The polypeptide is 3-deoxy-manno-octulosonate cytidylyltransferase (Bacteroides thetaiotaomicron (strain ATCC 29148 / DSM 2079 / JCM 5827 / CCUG 10774 / NCTC 10582 / VPI-5482 / E50)).